The following is a 441-amino-acid chain: tRNA-2-methylthio-N(6)-dimethylallyladenosine synthase (441 aa).

The MTTase N-terminal domain occupies 5–120; that stretch reads KLLYIETFGC…LPEMVRAAEQ (116 aa). 6 residues coordinate [4Fe-4S] cluster: Cys-14, Cys-50, Cys-83, Cys-158, Cys-162, and Cys-165. The region spanning 144-374 is the Radical SAM core domain; it reads EGGGVTRFVT…QGLQRDMTIE (231 aa). The TRAM domain occupies 377-439; that stretch reads AGFVGTCQAV…PNSLLGELAV (63 aa).

Belongs to the methylthiotransferase family. MiaB subfamily. As to quaternary structure, monomer. Requires [4Fe-4S] cluster as cofactor.

It localises to the cytoplasm. It carries out the reaction N(6)-dimethylallyladenosine(37) in tRNA + (sulfur carrier)-SH + AH2 + 2 S-adenosyl-L-methionine = 2-methylsulfanyl-N(6)-dimethylallyladenosine(37) in tRNA + (sulfur carrier)-H + 5'-deoxyadenosine + L-methionine + A + S-adenosyl-L-homocysteine + 2 H(+). In terms of biological role, catalyzes the methylthiolation of N6-(dimethylallyl)adenosine (i(6)A), leading to the formation of 2-methylthio-N6-(dimethylallyl)adenosine (ms(2)i(6)A) at position 37 in tRNAs that read codons beginning with uridine. This is tRNA-2-methylthio-N(6)-dimethylallyladenosine synthase from Geobacter metallireducens (strain ATCC 53774 / DSM 7210 / GS-15).